Reading from the N-terminus, the 146-residue chain is Transcriptional regulator MraZ (146 aa).

SpoVT-AbrB domains follow at residues 6-49 (TYDH…TEEE) and 78-121 (THEV…DQKS).

This sequence belongs to the MraZ family. Forms oligomers.

It localises to the cytoplasm. The protein resides in the nucleoid. The protein is Transcriptional regulator MraZ of Mesoplasma florum (strain ATCC 33453 / NBRC 100688 / NCTC 11704 / L1) (Acholeplasma florum).